A 197-amino-acid polypeptide reads, in one-letter code: Potassium-transporting ATPase KdpC subunit (197 aa).

A helical transmembrane segment spans residues 7–27 (PALVSMGLFTVLLGLAYPLAV).

It belongs to the KdpC family. As to quaternary structure, the system is composed of three essential subunits: KdpA, KdpB and KdpC.

It is found in the cell inner membrane. Its function is as follows. Part of the high-affinity ATP-driven potassium transport (or Kdp) system, which catalyzes the hydrolysis of ATP coupled with the electrogenic transport of potassium into the cytoplasm. This subunit acts as a catalytic chaperone that increases the ATP-binding affinity of the ATP-hydrolyzing subunit KdpB by the formation of a transient KdpB/KdpC/ATP ternary complex. The sequence is that of Potassium-transporting ATPase KdpC subunit from Caulobacter vibrioides (strain ATCC 19089 / CIP 103742 / CB 15) (Caulobacter crescentus).